A 296-amino-acid chain; its full sequence is Cytidine deaminase (296 aa).

CMP/dCMP-type deaminase domains follow at residues 47-167 and 186-296; these read ELNE…FGPS and DSND…VEPE. Residue 88–90 coordinates substrate; that stretch reads NIE. Zn(2+) is bound at residue H101. Catalysis depends on E103, which acts as the Proton donor. Zn(2+)-binding residues include C128 and C131.

Belongs to the cytidine and deoxycytidylate deaminase family. As to quaternary structure, homodimer. It depends on Zn(2+) as a cofactor.

The enzyme catalyses cytidine + H2O + H(+) = uridine + NH4(+). It carries out the reaction 2'-deoxycytidine + H2O + H(+) = 2'-deoxyuridine + NH4(+). This enzyme scavenges exogenous and endogenous cytidine and 2'-deoxycytidine for UMP synthesis. This Shewanella pealeana (strain ATCC 700345 / ANG-SQ1) protein is Cytidine deaminase.